Reading from the N-terminus, the 321-residue chain is tRNA U34 carboxymethyltransferase (321 aa).

Residues Lys-90, Trp-104, Lys-109, Gly-129, 151 to 153 (DPT), 180 to 181 (IE), Met-195, Tyr-199, and Arg-314 each bind carboxy-S-adenosyl-L-methionine.

Belongs to the class I-like SAM-binding methyltransferase superfamily. CmoB family. In terms of assembly, homotetramer.

It carries out the reaction carboxy-S-adenosyl-L-methionine + 5-hydroxyuridine(34) in tRNA = 5-carboxymethoxyuridine(34) in tRNA + S-adenosyl-L-homocysteine + H(+). Catalyzes carboxymethyl transfer from carboxy-S-adenosyl-L-methionine (Cx-SAM) to 5-hydroxyuridine (ho5U) to form 5-carboxymethoxyuridine (cmo5U) at position 34 in tRNAs. The polypeptide is tRNA U34 carboxymethyltransferase (Haemophilus influenzae (strain PittGG)).